Here is a 166-residue protein sequence, read N- to C-terminus: Ribosome maturation factor RimP (166 aa).

Belongs to the RimP family.

The protein resides in the cytoplasm. Required for maturation of 30S ribosomal subunits. This Paramagnetospirillum magneticum (strain ATCC 700264 / AMB-1) (Magnetospirillum magneticum) protein is Ribosome maturation factor RimP.